The sequence spans 250 residues: Cysteine proteinase inhibitor 12 (250 aa).

The signal sequence occupies residues 1–32; it reads MRVAATTRPASSSAAAPLPLFLLLAVAAAAAA. 2 consecutive Cystatin domains span residues 49-137 and 156-202; these read GGAH…RNTG and PGWR…AEVV. Residues 93–97 carry the Secondary area of contact motif; it reads QVVAG.

This sequence belongs to the cystatin family. Phytocystatin subfamily.

It localises to the secreted. In terms of biological role, specific inhibitor of cysteine proteinases. Probably involved in the regulation of endogenous processes and in defense against pests and pathogens. The polypeptide is Cysteine proteinase inhibitor 12 (Oryza sativa subsp. japonica (Rice)).